Consider the following 186-residue polypeptide: ATP synthase subunit delta (186 aa).

Belongs to the ATPase delta chain family. As to quaternary structure, F-type ATPases have 2 components, F(1) - the catalytic core - and F(0) - the membrane proton channel. F(1) has five subunits: alpha(3), beta(3), gamma(1), delta(1), epsilon(1). F(0) has three main subunits: a(1), b(2) and c(10-14). The alpha and beta chains form an alternating ring which encloses part of the gamma chain. F(1) is attached to F(0) by a central stalk formed by the gamma and epsilon chains, while a peripheral stalk is formed by the delta and b chains.

It is found in the cell inner membrane. F(1)F(0) ATP synthase produces ATP from ADP in the presence of a proton or sodium gradient. F-type ATPases consist of two structural domains, F(1) containing the extramembraneous catalytic core and F(0) containing the membrane proton channel, linked together by a central stalk and a peripheral stalk. During catalysis, ATP synthesis in the catalytic domain of F(1) is coupled via a rotary mechanism of the central stalk subunits to proton translocation. Functionally, this protein is part of the stalk that links CF(0) to CF(1). It either transmits conformational changes from CF(0) to CF(1) or is implicated in proton conduction. In Brucella suis biovar 1 (strain 1330), this protein is ATP synthase subunit delta.